A 262-amino-acid polypeptide reads, in one-letter code: MPPPPLISLDVEGVYFKTRIATLKSIEGTYFTKLFETNWREQLDRDGRLFIDRDSSVFPVILNFLRDHEKCSLPKDEYQLMRILREAVFFKIGPLRNMIEHKLRTFCTCPPELPSTPIPNQILTQKENVPIVPRNLLLSKPPPPPPPPLPSLMQPKDTVQIPMRKPPTGRNSKKIKTSADSISLPRNFTHIAHVGWNGASVLFDKKMTDDPTVRKICDAAAEAVDLSAVYNVVNKNADEESHSVEVLITGGLMQSRDGTSRH.

The region spanning P5 to C107 is the BTB domain. The 14-residue stretch at I182–G195 folds into the CRIB domain.

This is an uncharacterized protein from Caenorhabditis elegans.